The chain runs to 668 residues: DNA mismatch repair protein MutL (668 aa).

The interval 437–459 is disordered; that stretch reads TYQSQYSETGSHSQETLPLSEQK. The span at 438 to 459 shows a compositional bias: polar residues; the sequence is YQSQYSETGSHSQETLPLSEQK.

It belongs to the DNA mismatch repair MutL/HexB family.

In terms of biological role, this protein is involved in the repair of mismatches in DNA. It is required for dam-dependent methyl-directed DNA mismatch repair. May act as a 'molecular matchmaker', a protein that promotes the formation of a stable complex between two or more DNA-binding proteins in an ATP-dependent manner without itself being part of a final effector complex. This chain is DNA mismatch repair protein MutL, found in Leuconostoc citreum (strain KM20).